Consider the following 639-residue polypeptide: Complex I assembly factor Egm, mitochondrial (639 aa).

Residues 1–26 (MRPNLFSGASRLLTYSRNGKLLTRGR) constitute a mitochondrion transit peptide. The tract at residues 23–65 (TRGRSTKATSSSLDSQHQDAATTEGGRAESVEESPEQQRKLPT) is disordered. The span at 28–43 (TKATSSSLDSQHQDAA) shows a compositional bias: polar residues. The span at 48 to 65 (GRAESVEESPEQQRKLPT) shows a compositional bias: basic and acidic residues.

The protein belongs to the acyl-CoA dehydrogenase family. Associates with mitochondrial complex I assembly intermediates during its biogenesis. Requires FAD as cofactor.

The protein resides in the mitochondrion. Functionally, as part of the MCIA complex, primarily participates in the assembly of the mitochondrial complex I and therefore plays a role in oxidative phosphorylation. This chain is Complex I assembly factor Egm, mitochondrial, found in Drosophila melanogaster (Fruit fly).